We begin with the raw amino-acid sequence, 54 residues long: Ovomucoid (54 aa).

Positions 4 to 54 constitute a Kazal-like domain; sequence VDCSDHPKPVCSLEYMPLCGSDSKTYSNKCDFCNAVVESNGTLTLSHFGKC. Cystine bridges form between cysteine 6–cysteine 36, cysteine 14–cysteine 33, and cysteine 22–cysteine 54. N-linked (GlcNAc...) asparagine glycosylation is present at asparagine 43.

The protein resides in the secreted. The chain is Ovomucoid from Rhea americana (Greater rhea).